The chain runs to 232 residues: Phosphoribosylformylglycinamidine synthase subunit PurQ (232 aa).

Positions 2-232 (KIAILQFGGT…SMVDYITENF (231 aa)) constitute a Glutamine amidotransferase type-1 domain. Cys86 serves as the catalytic Nucleophile. Catalysis depends on residues His203 and Glu205.

In terms of assembly, part of the FGAM synthase complex composed of 1 PurL, 1 PurQ and 2 PurS subunits.

The protein localises to the cytoplasm. It carries out the reaction N(2)-formyl-N(1)-(5-phospho-beta-D-ribosyl)glycinamide + L-glutamine + ATP + H2O = 2-formamido-N(1)-(5-O-phospho-beta-D-ribosyl)acetamidine + L-glutamate + ADP + phosphate + H(+). The catalysed reaction is L-glutamine + H2O = L-glutamate + NH4(+). The protein operates within purine metabolism; IMP biosynthesis via de novo pathway; 5-amino-1-(5-phospho-D-ribosyl)imidazole from N(2)-formyl-N(1)-(5-phospho-D-ribosyl)glycinamide: step 1/2. In terms of biological role, part of the phosphoribosylformylglycinamidine synthase complex involved in the purines biosynthetic pathway. Catalyzes the ATP-dependent conversion of formylglycinamide ribonucleotide (FGAR) and glutamine to yield formylglycinamidine ribonucleotide (FGAM) and glutamate. The FGAM synthase complex is composed of three subunits. PurQ produces an ammonia molecule by converting glutamine to glutamate. PurL transfers the ammonia molecule to FGAR to form FGAM in an ATP-dependent manner. PurS interacts with PurQ and PurL and is thought to assist in the transfer of the ammonia molecule from PurQ to PurL. This is Phosphoribosylformylglycinamidine synthase subunit PurQ from Methanosarcina barkeri (strain Fusaro / DSM 804).